The primary structure comprises 114 residues: Large ribosomal subunit protein uL22 (114 aa).

It belongs to the universal ribosomal protein uL22 family. In terms of assembly, part of the 50S ribosomal subunit.

In terms of biological role, this protein binds specifically to 23S rRNA; its binding is stimulated by other ribosomal proteins, e.g. L4, L17, and L20. It is important during the early stages of 50S assembly. It makes multiple contacts with different domains of the 23S rRNA in the assembled 50S subunit and ribosome. Its function is as follows. The globular domain of the protein is located near the polypeptide exit tunnel on the outside of the subunit, while an extended beta-hairpin is found that lines the wall of the exit tunnel in the center of the 70S ribosome. The polypeptide is Large ribosomal subunit protein uL22 (Bacillus licheniformis (strain ATCC 14580 / DSM 13 / JCM 2505 / CCUG 7422 / NBRC 12200 / NCIMB 9375 / NCTC 10341 / NRRL NRS-1264 / Gibson 46)).